A 940-amino-acid chain; its full sequence is MEEDVFPKAYDPKGLEDKLYAFWEDAGMFTAQSASNKPPYAIIMPPPNVTGILHMGHALVNTLQDVLIRYKRMSGFEVCWVPGTDHAGIATQTVVERHLYSSLGKRRIDFSREEFLEYVWEWKEKSEGIILSQLRQLGCSCDWSRLRFTMEPLASRAVKKAFKVLFDRGHIYRGYYLVNWDPVLQTALADDEVEYEEKDGWLYYIRYRVVDSSDEIIVATTRPETLLGDTAIAISPDDERYSHLLGAKVHLPFVDREIPIIGDMSVDPLFGTGAVKITPAHDRDDYRTGINHNLPLVNILTPTGKINENGGIFAGLSKEKARDDIITALDAMGLFVKKEPYTLRVGVSYRSGAVIEPYLSKQWFVSVDSFRDSLREFVASDSIKIFPPEFTRNYLSWVNNLRDWCISRQLWWGHRIPVWYHKSDEDRIICYDGEGLPEEVAQDPDSWDQDPDVLDTWFSSGLWPLTCLGWPDVEAKDLKKFYPTSVLITGHDILFFWVTRMVLLCSAMVGEKPFSDVFLHGLIFGKSYKRYNNLGEWTYISGEEKHAYDMGKPLPKDVTAKWEKLSKSKGNVIDPLEMIDKYGADAVRMALCSCANRGEQIDLDYRLFEEYKNFANKIWNGARFIFGHISNLTGKDLADGINQNLLGLEDYYILDGFNRLLKELESAYQSYAFDRVTTMAYEFFRNDFCSTYIEIIKPTLYGKQGNDEDRLTKQKLLAVLLVNILGVLHPIAPFVTETLFLKLKEAIGVIVDASSDEITAHALNMLRADSYVLAPYPQAMRITIPDNLHASFALAERLVYTIRNIRGEMQLDPRASLEAFVICPEGVSVDTYVPMMCALGGLSSVEHLTEEPKDRVYSLGVVEGIRLGVFVPIEQITKEKNRLEKEKIRLEKAIESVSRLLGSENFRAKANPDLVSAKEEALKNNRMELQSILDKLASFS.

The 'HIGH' region signature appears at 47 to 57; that stretch reads PNVTGILHMGH. The 'KMSKS' region signature appears at 564-568; the sequence is KLSKS. ATP is bound at residue Lys567. Positions 872-938 form a coiled coil; that stretch reads PIEQITKEKN…LQSILDKLAS (67 aa).

The protein belongs to the class-I aminoacyl-tRNA synthetase family. ValS type 1 subfamily. Monomer.

The protein localises to the cytoplasm. It carries out the reaction tRNA(Val) + L-valine + ATP = L-valyl-tRNA(Val) + AMP + diphosphate. Functionally, catalyzes the attachment of valine to tRNA(Val). As ValRS can inadvertently accommodate and process structurally similar amino acids such as threonine, to avoid such errors, it has a 'posttransfer' editing activity that hydrolyzes mischarged Thr-tRNA(Val) in a tRNA-dependent manner. The polypeptide is Valine--tRNA ligase (Chlamydia felis (strain Fe/C-56) (Chlamydophila felis)).